Consider the following 565-residue polypeptide: Effector protease OspD3 (565 aa).

The protein belongs to the Toxin_15 family.

Its subcellular location is the secreted. Effector protease that disrupts necroptosis in host cells by mediating proteolytic cleavage of host RIPK1 and RIPK3. This chain is Effector protease OspD3, found in Shigella flexneri.